Here is a 1080-residue protein sequence, read N- to C-terminus: Carbamoyl phosphate synthase large chain (1080 aa).

A carboxyphosphate synthetic domain region spans residues 1–403 (MPKRTDLRTI…SLQKAVRGLE (403 aa)). Residues R129, R169, G175, G176, E208, V210, E215, G241, V242, H243, Q285, and E299 each contribute to the ATP site. In terms of domain architecture, ATP-grasp 1 spans 133–328 (RVAMQEIGLE…IAKIAAKLAV (196 aa)). 3 residues coordinate Mg(2+): Q285, E299, and N301. Residues Q285, E299, and N301 each coordinate Mn(2+). Residues 404-554 (TGKVGLEPTG…YSTYEEECEA (151 aa)) are oligomerization domain. The interval 555–942 (APSDRRKIMI…AFARAQEAGD (388 aa)) is carbamoyl phosphate synthetic domain. The ATP-grasp 2 domain maps to 679 to 876 (QKLVQQLGLR…LAKIAARCMT (198 aa)). ATP-binding residues include R715, R754, L756, E761, G787, V788, H789, S790, Q830, and E847. Mg(2+) is bound by residues Q830, E847, and N849. Mn(2+)-binding residues include Q830, E847, and N849. The MGS-like domain maps to 943–1080 (IRAPQPGRAF…LQELHKELQV (138 aa)). Residues 943–1080 (IRAPQPGRAF…LQELHKELQV (138 aa)) are allosteric domain.

This sequence belongs to the CarB family. Composed of two chains; the small (or glutamine) chain promotes the hydrolysis of glutamine to ammonia, which is used by the large (or ammonia) chain to synthesize carbamoyl phosphate. Tetramer of heterodimers (alpha,beta)4. Mg(2+) is required as a cofactor. It depends on Mn(2+) as a cofactor.

It carries out the reaction hydrogencarbonate + L-glutamine + 2 ATP + H2O = carbamoyl phosphate + L-glutamate + 2 ADP + phosphate + 2 H(+). The enzyme catalyses hydrogencarbonate + NH4(+) + 2 ATP = carbamoyl phosphate + 2 ADP + phosphate + 2 H(+). The protein operates within amino-acid biosynthesis; L-arginine biosynthesis; carbamoyl phosphate from bicarbonate: step 1/1. It functions in the pathway pyrimidine metabolism; UMP biosynthesis via de novo pathway; (S)-dihydroorotate from bicarbonate: step 1/3. Functionally, large subunit of the glutamine-dependent carbamoyl phosphate synthetase (CPSase). CPSase catalyzes the formation of carbamoyl phosphate from the ammonia moiety of glutamine, carbonate, and phosphate donated by ATP, constituting the first step of 2 biosynthetic pathways, one leading to arginine and/or urea and the other to pyrimidine nucleotides. The large subunit (synthetase) binds the substrates ammonia (free or transferred from glutamine from the small subunit), hydrogencarbonate and ATP and carries out an ATP-coupled ligase reaction, activating hydrogencarbonate by forming carboxy phosphate which reacts with ammonia to form carbamoyl phosphate. This Xylella fastidiosa (strain 9a5c) protein is Carbamoyl phosphate synthase large chain.